The primary structure comprises 1085 residues: Ankyrin repeat and IBR domain-containing protein 1 (1085 aa).

The N-myristoyl glycine moiety is linked to residue glycine 2. 2 ANK repeats span residues 45–75 and 145–174; these read QHNTPLHYAARHGMNRILGTFLFGRDGNPNK and KKNTPLHYAAASGMKACVELLVKHGGDLFA. The tract at residues 282–322 is disordered; the sequence is CQRSGVQMPTPPPSGYNAWDTLPSPRTPRTTRSSVTSPDEI. Positions 304-319 are enriched in low complexity; the sequence is PSPRTPRTTRSSVTSP. Residues 330–570 are TRIAD supradomain; that stretch reads DTSLCDICMC…GGYYRCTRYE (241 aa). Cysteine 334, cysteine 337, cysteine 352, histidine 354, cysteine 357, cysteine 360, cysteine 379, cysteine 384, cysteine 466, cysteine 469, histidine 474, cysteine 479, cysteine 520, and cysteine 523 together coordinate Zn(2+). The RING-type 1 zinc-finger motif lies at 334–384; that stretch reads CDICMCSISVFEDPVDMPCGHDFCRGCWEAFLNLKIQEGEAHNIFCPAYEC. The segment at 402–479 adopts an IBR-type zinc-finger fold; it reads DKRYLQFDIK…LGEAHEPCDC (78 aa). The RING-type 2; atypical zinc-finger motif lies at 520–549; sequence CANCKSPIQKNEGCNHMQCAKCKYDFCWIC. The active site involves cysteine 533. Zn(2+) contacts are provided by cysteine 538, cysteine 541, cysteine 546, cysteine 549, histidine 556, and cysteine 566. The stretch at 576–641 forms a coiled coil; that stretch reads EEQSKEMTVE…RALKETEGGC (66 aa). A Phosphoserine modification is found at serine 738. The interval 764 to 808 is disordered; it reads RRRHRQQRRRGDVHSLLSNPTDLDEPSESTFDLPEGSSGRRPGAS. Residues 846 to 865 enclose the UIM domain; that stretch reads EDDPNILLAIQLSLQESGLD. A phosphoserine mark is found at serine 879 and serine 906. Disordered regions lie at residues 884–907, 921–959, and 1014–1085; these read GSSLPSRLDSVPRSTESPRAALSS, GADSDPFSTDTLSSRPLSETRSDFCPSSSDLDSAGQDPS, and PPED…VHSV. Residues 926-959 show a composition bias toward polar residues; it reads PFSTDTLSSRPLSETRSDFCPSSSDLDSAGQDPS. Basic and acidic residues predominate over residues 1018-1033; it reads SVSKDTGVHEGERAQM. Positions 1068–1085 are enriched in polar residues; sequence ASQTPQTSSDWLEQVHSV.

Belongs to the RBR family.

It catalyses the reaction [E2 ubiquitin-conjugating enzyme]-S-ubiquitinyl-L-cysteine + [acceptor protein]-L-lysine = [E2 ubiquitin-conjugating enzyme]-L-cysteine + [acceptor protein]-N(6)-ubiquitinyl-L-lysine.. Functionally, might act as an E3 ubiquitin-protein ligase, or as part of E3 complex, which accepts ubiquitin from specific E2 ubiquitin-conjugating enzymes and then transfers it to substrates. The polypeptide is Ankyrin repeat and IBR domain-containing protein 1 (Ankib1) (Mus musculus (Mouse)).